The sequence spans 320 residues: Probable trehalose-phosphate phosphatase C (320 aa).

Belongs to the trehalose phosphatase family. It depends on a divalent metal cation as a cofactor.

It carries out the reaction alpha,alpha-trehalose 6-phosphate + H2O = alpha,alpha-trehalose + phosphate. It functions in the pathway glycan biosynthesis; trehalose biosynthesis. Removes the phosphate from trehalose 6-phosphate to produce free trehalose. Trehalose accumulation in plant may improve abiotic stress tolerance. The chain is Probable trehalose-phosphate phosphatase C (TPPC) from Arabidopsis thaliana (Mouse-ear cress).